The sequence spans 114 residues: Beta-microseminoprotein (114 aa).

The first 20 residues, 1–20 (MNVLLGSVVIFATFVTLCNA), serve as a signal peptide directing secretion. Intrachain disulfides connect Cys-22/Cys-70, Cys-38/Cys-62, Cys-57/Cys-93, Cys-60/Cys-69, and Cys-84/Cys-107.

Belongs to the beta-microseminoprotein family. In terms of assembly, homodimer; Interacts with PI16. Strongly expressed in prostate, liver, kidney, breast and penis. Also expressed in pancreas, esophagus, stomach, deodenum, colon, trachea, lung, salivary glands and fallopian tube. PSP94 is expressed in lung and breast, whereas PSP57 is found in kidney and bladder.

The protein localises to the secreted. This is Beta-microseminoprotein (MSMB) from Homo sapiens (Human).